Here is a 732-residue protein sequence, read N- to C-terminus: Elongation factor 2 (732 aa).

The 210-residue stretch at 19–228 (ELVRNIGIVA…TKITFKDIVE (210 aa)) folds into the tr-type G domain. GTP is bound by residues 28 to 35 (AHIDHGKT), 94 to 98 (DTPGH), and 148 to 151 (NKID). His-598 bears the Diphthamide mark.

The protein belongs to the TRAFAC class translation factor GTPase superfamily. Classic translation factor GTPase family. EF-G/EF-2 subfamily.

It localises to the cytoplasm. In terms of biological role, catalyzes the GTP-dependent ribosomal translocation step during translation elongation. During this step, the ribosome changes from the pre-translocational (PRE) to the post-translocational (POST) state as the newly formed A-site-bound peptidyl-tRNA and P-site-bound deacylated tRNA move to the P and E sites, respectively. Catalyzes the coordinated movement of the two tRNA molecules, the mRNA and conformational changes in the ribosome. The polypeptide is Elongation factor 2 (Thermoplasma volcanium (strain ATCC 51530 / DSM 4299 / JCM 9571 / NBRC 15438 / GSS1)).